A 279-amino-acid polypeptide reads, in one-letter code: Pantothenate synthetase (279 aa).

Residue 31-38 (MGNLHGGH) participates in ATP binding. His-38 serves as the catalytic Proton donor. Residue Gln-62 coordinates (R)-pantoate. Beta-alanine is bound at residue Gln-62. 150–153 (GRKD) is a binding site for ATP. Gln-156 lines the (R)-pantoate pocket. ATP-binding positions include Val-179 and 187-190 (KSSR).

The protein belongs to the pantothenate synthetase family. As to quaternary structure, homodimer.

Its subcellular location is the cytoplasm. It carries out the reaction (R)-pantoate + beta-alanine + ATP = (R)-pantothenate + AMP + diphosphate + H(+). It participates in cofactor biosynthesis; (R)-pantothenate biosynthesis; (R)-pantothenate from (R)-pantoate and beta-alanine: step 1/1. In terms of biological role, catalyzes the condensation of pantoate with beta-alanine in an ATP-dependent reaction via a pantoyl-adenylate intermediate. This Stenotrophomonas maltophilia (strain R551-3) protein is Pantothenate synthetase.